The chain runs to 356 residues: UDP-3-O-acylglucosamine N-acyltransferase (356 aa).

Histidine 242 (proton acceptor) is an active-site residue.

This sequence belongs to the transferase hexapeptide repeat family. LpxD subfamily. In terms of assembly, homotrimer.

The catalysed reaction is a UDP-3-O-[(3R)-3-hydroxyacyl]-alpha-D-glucosamine + a (3R)-hydroxyacyl-[ACP] = a UDP-2-N,3-O-bis[(3R)-3-hydroxyacyl]-alpha-D-glucosamine + holo-[ACP] + H(+). It participates in bacterial outer membrane biogenesis; LPS lipid A biosynthesis. Functionally, catalyzes the N-acylation of UDP-3-O-acylglucosamine using 3-hydroxyacyl-ACP as the acyl donor. Is involved in the biosynthesis of lipid A, a phosphorylated glycolipid that anchors the lipopolysaccharide to the outer membrane of the cell. The protein is UDP-3-O-acylglucosamine N-acyltransferase of Acinetobacter baylyi (strain ATCC 33305 / BD413 / ADP1).